Consider the following 649-residue polypeptide: Protein phosphatase Slingshot homolog 3 (649 aa).

Over residues 1 to 20 (MALVTVSRSPPASGHSTPVG) the composition is skewed to polar residues. The disordered stretch occupies residues 1–32 (MALVTVSRSPPASGHSTPVGPTQDRVVRRRGR). At alanine 2 the chain carries N-acetylalanine. 2 positions are modified to phosphoserine: serine 9 and serine 38. Residues 49–90 (LQDGGDSNVASEADSEPMEEPSGEEQPTEDQTDKGQGLQSPW) form a disordered region. Residues 61-78 (ADSEPMEEPSGEEQPTED) are compositionally biased toward acidic residues. Phosphoserine is present on serine 88. Positions 266-321 (EKMEQAILAELWQVLDTSDLDSVTSKEIRQALELRLGCPLQQYRDFIDNQMLLLMA) constitute a DEK-C domain. The Tyrosine-protein phosphatase domain occupies 325–466 (RASRIFPHLY…LRTYQGILTA (142 aa)). Catalysis depends on cysteine 410, which acts as the Phosphocysteine intermediate. 2 stretches are compositionally biased toward low complexity: residues 541 to 551 (LEPSESESTPE) and 608 to 627 (TRAFQEQGQGQEQSEPGMSS). Disordered regions lie at residues 541-586 (LEPS…KGPW) and 608-649 (TRAF…EDKA). The segment covering 639–649 (SVDDSREEDKA) has biased composition (basic and acidic residues).

Belongs to the protein-tyrosine phosphatase family. As to quaternary structure, does not bind to, or colocalize with, filamentous actin. In terms of tissue distribution, expressed in brain, small intestine and testis. Also expressed at lower levels in heart, kidney, liver, spleen and thymus.

Its subcellular location is the cytoplasm. The protein resides in the cytoskeleton. It is found in the nucleus. The enzyme catalyses O-phospho-L-tyrosyl-[protein] + H2O = L-tyrosyl-[protein] + phosphate. It carries out the reaction O-phospho-L-seryl-[protein] + H2O = L-seryl-[protein] + phosphate. It catalyses the reaction O-phospho-L-threonyl-[protein] + H2O = L-threonyl-[protein] + phosphate. In terms of biological role, protein phosphatase which may play a role in the regulation of actin filament dynamics. Can dephosphorylate and activate the actin binding/depolymerizing factor cofilin, which subsequently binds to actin filaments and stimulates their disassembly. In Mus musculus (Mouse), this protein is Protein phosphatase Slingshot homolog 3 (Ssh3).